We begin with the raw amino-acid sequence, 173 residues long: Membrane protein PM19L (173 aa).

The next 4 membrane-spanning stretches (helical) occupy residues 9 to 29 (IAPLLVLNLIMYLIVIGFASW), 43 to 63 (GVAGNGATFYFLVFAILAGVV), 83 to 103 (LAAGAASALIAWAITALAFGL), and 124 to 144 (FVIILAFTQLLYVAMLHGGLF).

As to expression, expressed in roots, leaf blades, leaf sheaths, stems, spikelets and embryos.

The protein resides in the membrane. Its function is as follows. May be involved in abiotic stress response through abscisic acid-dependent signaling. This Oryza sativa subsp. japonica (Rice) protein is Membrane protein PM19L.